The primary structure comprises 379 residues: Succinyl-diaminopimelate desuccinylase (379 aa).

Residue H70 participates in Zn(2+) binding. Residue D72 is part of the active site. D103 serves as a coordination point for Zn(2+). The active-site Proton acceptor is the E137. The Zn(2+) site is built by E138, E166, and H352.

It belongs to the peptidase M20A family. DapE subfamily. In terms of assembly, homodimer. It depends on Zn(2+) as a cofactor. Requires Co(2+) as cofactor.

It catalyses the reaction N-succinyl-(2S,6S)-2,6-diaminopimelate + H2O = (2S,6S)-2,6-diaminopimelate + succinate. It functions in the pathway amino-acid biosynthesis; L-lysine biosynthesis via DAP pathway; LL-2,6-diaminopimelate from (S)-tetrahydrodipicolinate (succinylase route): step 3/3. Functionally, catalyzes the hydrolysis of N-succinyl-L,L-diaminopimelic acid (SDAP), forming succinate and LL-2,6-diaminopimelate (DAP), an intermediate involved in the bacterial biosynthesis of lysine and meso-diaminopimelic acid, an essential component of bacterial cell walls. In Burkholderia pseudomallei (strain 1106a), this protein is Succinyl-diaminopimelate desuccinylase.